Here is a 111-residue protein sequence, read N- to C-terminus: 2Fe-2S ferredoxin (111 aa).

The 2Fe-2S ferredoxin-type domain maps to 1–104 (MPKVLFLPHK…DIEVEIPLYN (104 aa)). Positions 42, 48, 51, and 87 each coordinate [2Fe-2S] cluster.

Belongs to the adrenodoxin/putidaredoxin family. It depends on [2Fe-2S] cluster as a cofactor.

Functionally, ferredoxin are iron-sulfur proteins that transfer electrons in a wide variety of metabolic reactions. The sequence is that of 2Fe-2S ferredoxin (fdx) from Buchnera aphidicola subsp. Acyrthosiphon pisum (strain APS) (Acyrthosiphon pisum symbiotic bacterium).